A 90-amino-acid polypeptide reads, in one-letter code: Progonadoliberin-3 (90 aa).

The signal sequence occupies residues 1–23 (MEAGSRVIMQVLLLALVVQVTLS). Gln24 is modified (pyrrolidone carboxylic acid). Glycine amide is present on Gly33.

Belongs to the GnRH family. In terms of tissue distribution, expressed only in the terminal nerve nucleus of the telencephalon.

The protein localises to the secreted. Stimulates the secretion of gonadotropins. In Haplochromis burtoni (Burton's mouthbrooder), this protein is Progonadoliberin-3 (gnrh3).